A 412-amino-acid chain; its full sequence is uncharacterized protein (412 aa).

Position 49 (His49) interacts with Zn(2+). Catalysis depends on Glu52, which acts as the Proton acceptor. Residues His53 and Glu129 each coordinate Zn(2+).

This sequence belongs to the peptidase M16 family. Zn(2+) serves as cofactor.

This is an uncharacterized protein from Rickettsia bellii (strain RML369-C).